Consider the following 352-residue polypeptide: Biotin synthase (352 aa).

The Radical SAM core domain maps to Asn-44–Gln-262. [4Fe-4S] cluster-binding residues include Cys-59, Cys-63, and Cys-66. 4 residues coordinate [2Fe-2S] cluster: Cys-103, Cys-134, Cys-194, and Arg-266.

This sequence belongs to the radical SAM superfamily. Biotin synthase family. As to quaternary structure, homodimer. [4Fe-4S] cluster is required as a cofactor. Requires [2Fe-2S] cluster as cofactor.

It catalyses the reaction (4R,5S)-dethiobiotin + (sulfur carrier)-SH + 2 reduced [2Fe-2S]-[ferredoxin] + 2 S-adenosyl-L-methionine = (sulfur carrier)-H + biotin + 2 5'-deoxyadenosine + 2 L-methionine + 2 oxidized [2Fe-2S]-[ferredoxin]. Its pathway is cofactor biosynthesis; biotin biosynthesis; biotin from 7,8-diaminononanoate: step 2/2. In terms of biological role, catalyzes the conversion of dethiobiotin (DTB) to biotin by the insertion of a sulfur atom into dethiobiotin via a radical-based mechanism. This Pseudomonas syringae pv. tomato (strain ATCC BAA-871 / DC3000) protein is Biotin synthase.